The primary structure comprises 546 residues: Probable sucrose-6-phosphate hydrolase (546 aa).

Substrate is bound by residues 105–108, Gln-124, 167–168, 228–229, and Glu-283; these read LLND, FS, and RD. Asp-108 is a catalytic residue.

This sequence belongs to the glycosyl hydrolase 32 family.

The protein localises to the cytoplasm. The enzyme catalyses Hydrolysis of terminal non-reducing beta-D-fructofuranoside residues in beta-D-fructofuranosides.. It functions in the pathway glycan biosynthesis; sucrose metabolism. Functionally, enables the bacterium to metabolize sucrose as a sole carbon source. The sequence is that of Probable sucrose-6-phosphate hydrolase from Vibrio cholerae.